The sequence spans 381 residues: tRNA pseudouridine synthase D (381 aa).

Aspartate 81 (nucleophile) is an active-site residue. The 176-residue stretch at 160–335 (GMPNYFGSQR…TLGSRRFFWV (176 aa)) folds into the TRUD domain.

This sequence belongs to the pseudouridine synthase TruD family.

The enzyme catalyses uridine(13) in tRNA = pseudouridine(13) in tRNA. In terms of biological role, responsible for synthesis of pseudouridine from uracil-13 in transfer RNAs. This chain is tRNA pseudouridine synthase D, found in Helicobacter pylori (strain G27).